Consider the following 276-residue polypeptide: Secretagogin (276 aa).

EF-hand domains follow at residues 12–47, 58–93, 105–140, 149–184, 197–232, and 240–276; these read LDAAGFWQVWQRFDADEKGYIEEKELDAFFLHMLMK, NLHKVKQQFMTTQDASKDGRIRMKELAGMFLSEDEN, DSSVEFMQIWRKYDADSSGFISAAELRNFLRDLFLH, KLEEYTGTMMKIFDRNKDGRLDLNDLARILALQENF, ERKRDFEKIFAYYDVSKTGALEGPEVDGFVKDMMEL, and VDLDKFREILLRHCDVNKDGKIQKSELALCLGLKINP. Ca(2+) contacts are provided by Asp25, Asp27, Tyr31, Glu36, Asp71, Ser73, Asp75, Arg77, Glu82, Asp118, Asp120, Ser122, Glu129, Asp162, Asn164, Asp166, Arg168, Asp173, Asp210, Ser212, Thr214, Glu221, Asp254, Asn256, Asp258, Lys260, and Glu265.

Expressed at high levels in the pancreatic islets of Langerhans and to a much lesser extent in the gastrointestinal tract (stomach, small intestine and colon), the adrenal medulla and cortex and the thyroid C-cells. In the brain, the expression is restricted to distinct subtypes of neurons with highest expression in the molecular layer of the cerebellum (stellate and basket cells), in the anterior part of the pituitary gland, in the thalamus, in the hypothalamus and in a subgroup of neocortical neurons.

The protein resides in the cytoplasm. Its subcellular location is the secreted. The protein localises to the cytoplasmic vesicle. It is found in the secretory vesicle membrane. This Homo sapiens (Human) protein is Secretagogin (SCGN).